The following is a 486-amino-acid chain: Aspartyl/glutamyl-tRNA(Asn/Gln) amidotransferase subunit B (486 aa).

This sequence belongs to the GatB/GatE family. GatB subfamily. As to quaternary structure, heterotrimer of A, B and C subunits.

The catalysed reaction is L-glutamyl-tRNA(Gln) + L-glutamine + ATP + H2O = L-glutaminyl-tRNA(Gln) + L-glutamate + ADP + phosphate + H(+). It catalyses the reaction L-aspartyl-tRNA(Asn) + L-glutamine + ATP + H2O = L-asparaginyl-tRNA(Asn) + L-glutamate + ADP + phosphate + 2 H(+). Functionally, allows the formation of correctly charged Asn-tRNA(Asn) or Gln-tRNA(Gln) through the transamidation of misacylated Asp-tRNA(Asn) or Glu-tRNA(Gln) in organisms which lack either or both of asparaginyl-tRNA or glutaminyl-tRNA synthetases. The reaction takes place in the presence of glutamine and ATP through an activated phospho-Asp-tRNA(Asn) or phospho-Glu-tRNA(Gln). The polypeptide is Aspartyl/glutamyl-tRNA(Asn/Gln) amidotransferase subunit B (Orientia tsutsugamushi (strain Ikeda) (Rickettsia tsutsugamushi)).